The sequence spans 97 residues: MTDLRHYDVIVSPVITEKSTMVSEHNQVVFNVARKATKPEIKAAVEALFGVKVTAVNTAVRKGKVKRFCGLVGRQSDVKKAIVTLAEGQSIDVSTGL.

This sequence belongs to the universal ribosomal protein uL23 family. Part of the 50S ribosomal subunit. Contacts protein L29, and trigger factor when it is bound to the ribosome.

Functionally, one of the early assembly proteins it binds 23S rRNA. One of the proteins that surrounds the polypeptide exit tunnel on the outside of the ribosome. Forms the main docking site for trigger factor binding to the ribosome. The polypeptide is Large ribosomal subunit protein uL23 (Brucella suis (strain ATCC 23445 / NCTC 10510)).